The chain runs to 337 residues: MRFYNREKELNYLKNYVQLEPNSILFVYGPKSSGKSTVMMRVIKELENSNIVFFYYNLRKYATPTKDEFLSIFFEKSDKKYLLNKLEINLKIFKFGIEENFDFNNIKLNDVFAKINESINTVIKDGKRPVLVIDELQKLKNIYFNSGKSLLNELFNLFVSLTKMEHLCHVICLTSDTLFIDNVYRNSSLSEASEYYLIDWLKKDDIKKILKEEGFNKKEIDYCLNYLSLPYEISQLINNKKLGLSVEETIKRWINIEADGIKYLIDTSDLNEEEIYKVLSKFKDKIKINYKKDVKKEEMKYIKFLIENEILFYDVINGIIKPTSVKKWYAIKEILDK.

Residue 29-36 (GPKSSGKS) participates in ATP binding.

The protein belongs to the archaeal ATPase family.

This is an uncharacterized protein from Methanocaldococcus jannaschii (strain ATCC 43067 / DSM 2661 / JAL-1 / JCM 10045 / NBRC 100440) (Methanococcus jannaschii).